The sequence spans 671 residues: UvrABC system protein B (671 aa).

In terms of domain architecture, Helicase ATP-binding spans 31–189; sequence KGFEEGKKEQ…QLVDIQFDRN (159 aa). 44 to 51 lines the ATP pocket; the sequence is GATGTGKT. The short motif at 97 to 120 is the Beta-hairpin element; it reads YYDYYQPEAYVPSTDTYIEKDSAI. In terms of domain architecture, Helicase C-terminal spans 437–599; the sequence is QIDDLVGEIN…ITPKTIIKPI (163 aa). The region spanning 634–669 is the UVR domain; the sequence is KELVANLRSQMQAAAKKLDFEQAASLRDTILELQAD.

This sequence belongs to the UvrB family. As to quaternary structure, forms a heterotetramer with UvrA during the search for lesions. Interacts with UvrC in an incision complex.

The protein localises to the cytoplasm. In terms of biological role, the UvrABC repair system catalyzes the recognition and processing of DNA lesions. A damage recognition complex composed of 2 UvrA and 2 UvrB subunits scans DNA for abnormalities. Upon binding of the UvrA(2)B(2) complex to a putative damaged site, the DNA wraps around one UvrB monomer. DNA wrap is dependent on ATP binding by UvrB and probably causes local melting of the DNA helix, facilitating insertion of UvrB beta-hairpin between the DNA strands. Then UvrB probes one DNA strand for the presence of a lesion. If a lesion is found the UvrA subunits dissociate and the UvrB-DNA preincision complex is formed. This complex is subsequently bound by UvrC and the second UvrB is released. If no lesion is found, the DNA wraps around the other UvrB subunit that will check the other stand for damage. This is UvrABC system protein B from Lacticaseibacillus casei (strain BL23) (Lactobacillus casei).